A 338-amino-acid chain; its full sequence is Ketol-acid reductoisomerase (NADP(+)) (338 aa).

Residues 1-181 (MKVFYDKDAD…GGGRAGIIET (181 aa)) enclose the KARI N-terminal Rossmann domain. NADP(+)-binding positions include 24–27 (YGSQ), Arg47, and Ser52. His107 is a catalytic residue. Gly133 provides a ligand contact to NADP(+). Residues 182–327 (NFREETETDL…AKLRAMMPWI (146 aa)) form the KARI C-terminal knotted domain. Mg(2+)-binding residues include Asp190, Glu194, Glu226, and Glu230. Ser251 serves as a coordination point for substrate.

The protein belongs to the ketol-acid reductoisomerase family. Mg(2+) is required as a cofactor.

It catalyses the reaction (2R)-2,3-dihydroxy-3-methylbutanoate + NADP(+) = (2S)-2-acetolactate + NADPH + H(+). It carries out the reaction (2R,3R)-2,3-dihydroxy-3-methylpentanoate + NADP(+) = (S)-2-ethyl-2-hydroxy-3-oxobutanoate + NADPH + H(+). It functions in the pathway amino-acid biosynthesis; L-isoleucine biosynthesis; L-isoleucine from 2-oxobutanoate: step 2/4. The protein operates within amino-acid biosynthesis; L-valine biosynthesis; L-valine from pyruvate: step 2/4. In terms of biological role, involved in the biosynthesis of branched-chain amino acids (BCAA). Catalyzes an alkyl-migration followed by a ketol-acid reduction of (S)-2-acetolactate (S2AL) to yield (R)-2,3-dihydroxy-isovalerate. In the isomerase reaction, S2AL is rearranged via a Mg-dependent methyl migration to produce 3-hydroxy-3-methyl-2-ketobutyrate (HMKB). In the reductase reaction, this 2-ketoacid undergoes a metal-dependent reduction by NADPH to yield (R)-2,3-dihydroxy-isovalerate. This Ralstonia nicotianae (strain ATCC BAA-1114 / GMI1000) (Ralstonia solanacearum) protein is Ketol-acid reductoisomerase (NADP(+)).